A 780-amino-acid chain; its full sequence is Heat shock protein 90-5, chloroplastic (780 aa).

The N-terminal 60 residues, 1 to 60 (MAPALSRSLYTSPLTSVPITPVSSRLSHLRSSFLPHGGALRTGVSCSWNLEKRCNRFAVK), are a transit peptide targeting the chloroplast. ATP-binding positions include Glu-106, Asn-110, Asp-152, Met-157, 172–173 (SG), 196–201 (QFGVGF), Thr-251, and Arg-441. The tract at residues 742-780 (GRVEEEEESSTVNEGDDKSGETEVVEPSEVRAESDPWQD) is disordered. The segment covering 769–780 (SEVRAESDPWQD) has biased composition (basic and acidic residues).

The protein belongs to the heat shock protein 90 family. Homodimer. Interacts with VIPP1. Interacts with P23-1. Expressed in roots, cotyledons, young leaves, mature leaves, stems, flowers, petals and siliques.

The protein localises to the plastid. It is found in the chloroplast stroma. In terms of biological role, molecular chaperone required for chloroplast biogenesis. Essential for chloroplast biogenesis and maintenance, and thus for embryogenesis. May be involved in the disassembly of VIPP1 for thylakoid membrane formation and/or maintenance. Cooperates with TIC components and other molecular chaperones to drive transport of preproteins into chloroplasts and functions in the chloroplast stroma to facilitate membrane translocation during protein import into the organelle. The polypeptide is Heat shock protein 90-5, chloroplastic (Arabidopsis thaliana (Mouse-ear cress)).